Here is a 270-residue protein sequence, read N- to C-terminus: Regulatory protein RecX (270 aa).

The protein belongs to the RecX family.

It localises to the cytoplasm. Functionally, modulates RecA activity. The protein is Regulatory protein RecX of Bacillus cereus (strain 03BB102).